Here is a 337-residue protein sequence, read N- to C-terminus: tRNA N6-adenosine threonylcarbamoyltransferase (337 aa).

2 residues coordinate Fe cation: histidine 111 and histidine 115. Residues 134 to 138, aspartate 167, glycine 180, and asparagine 272 each bind substrate; that span reads LVSGG. Aspartate 300 is a binding site for Fe cation.

The protein belongs to the KAE1 / TsaD family. Fe(2+) serves as cofactor.

It is found in the cytoplasm. It carries out the reaction L-threonylcarbamoyladenylate + adenosine(37) in tRNA = N(6)-L-threonylcarbamoyladenosine(37) in tRNA + AMP + H(+). Functionally, required for the formation of a threonylcarbamoyl group on adenosine at position 37 (t(6)A37) in tRNAs that read codons beginning with adenine. Is involved in the transfer of the threonylcarbamoyl moiety of threonylcarbamoyl-AMP (TC-AMP) to the N6 group of A37, together with TsaE and TsaB. TsaD likely plays a direct catalytic role in this reaction. The sequence is that of tRNA N6-adenosine threonylcarbamoyltransferase from Yersinia pseudotuberculosis serotype I (strain IP32953).